A 270-amino-acid polypeptide reads, in one-letter code: Urease accessory protein UreD (270 aa).

Belongs to the UreD family. In terms of assembly, ureD, UreF and UreG form a complex that acts as a GTP-hydrolysis-dependent molecular chaperone, activating the urease apoprotein by helping to assemble the nickel containing metallocenter of UreC. The UreE protein probably delivers the nickel.

The protein resides in the cytoplasm. In terms of biological role, required for maturation of urease via the functional incorporation of the urease nickel metallocenter. This chain is Urease accessory protein UreD, found in Synechocystis sp. (strain ATCC 27184 / PCC 6803 / Kazusa).